Consider the following 223-residue polypeptide: Urease accessory protein UreF (223 aa).

The protein belongs to the UreF family. As to quaternary structure, ureD, UreF and UreG form a complex that acts as a GTP-hydrolysis-dependent molecular chaperone, activating the urease apoprotein by helping to assemble the nickel containing metallocenter of UreC. The UreE protein probably delivers the nickel.

Its subcellular location is the cytoplasm. Required for maturation of urease via the functional incorporation of the urease nickel metallocenter. The polypeptide is Urease accessory protein UreF (Sinorhizobium medicae (strain WSM419) (Ensifer medicae)).